We begin with the raw amino-acid sequence, 137 residues long: Crustacean hyperglycemic hormones (137 aa).

The signal sequence occupies residues M1–G28. Pyrrolidone carboxylic acid is present on Q64. Residue F66 is modified to D-phenylalanine; in form CHH-II. 3 disulfide bridges follow: C70–C106, C86–C102, and C89–C115. V135 carries the post-translational modification Valine amide.

This sequence belongs to the arthropod CHH/MIH/GIH/VIH hormone family. Produced by the medulla terminalis X-organ in the eyestalks and transported to the sinus gland where they are stored and released.

It localises to the secreted. Functionally, hormone found in the sinus gland of isopods and decapods which controls the blood sugar level. Has a secretagogue action over the amylase released from the midgut gland. May act as a stress hormone and may be involved in the control of molting and reproduction. The chain is Crustacean hyperglycemic hormones from Procambarus clarkii (Red swamp crayfish).